A 137-amino-acid chain; its full sequence is Crustacean calcium-binding protein 23 (137 aa).

3 consecutive EF-hand domains span residues Arg27–Asp48, Glu62–Lys97, and Ala100–Leu135.

Monomer or disulfide-linked dimers.

In terms of biological role, possibly acts as a regulatory protein and not as a calcium buffer or transport protein. The sequence is that of Crustacean calcium-binding protein 23 from Homarus americanus (American lobster).